The following is a 470-amino-acid chain: Fumarate reductase 1 (470 aa).

FAD is bound at residue 6 to 20 (VVVIGTGLAGLAAAN). The residue at position 66 (Ser-66) is a Phosphoserine. Catalysis depends on residues His-249 and Arg-272.

This sequence belongs to the FAD-dependent oxidoreductase 2 family. FRD/SDH subfamily. It depends on FAD as a cofactor. Post-translationally, the N-terminus is blocked.

The protein localises to the cytoplasm. The enzyme catalyses succinate + NAD(+) = fumarate + NADH + H(+). Functionally, irreversibly catalyzes the reduction of fumarate to succinate. Together with the second isozyme of soluble fumarate reductase (OSM1), essential for anaerobic growth. Involved in maintaining redox balance. Reduction of fumarate is the main source of succinate during fermentation, and under anaerobic conditions, the formation of succinate is strictly required for the reoxidation of FADH(2). The chain is Fumarate reductase 1 (FRD1) from Saccharomyces cerevisiae (strain ATCC 204508 / S288c) (Baker's yeast).